A 331-amino-acid polypeptide reads, in one-letter code: Cathepsin 7 (331 aa).

Positions 1 to 17 are cleaved as a signal peptide; that stretch reads MTVAVFLAILCLRAALA. Positions 18–111 are cleaved as a propeptide — activation peptide; that stretch reads APRPDYSLDA…GKHIQKRNVK (94 aa). Positions 33–50 match the Nuclear localization signal motif; the sequence is KRNNAKTYSPEEEKQRRA. Asn72 carries N-linked (GlcNAc...) asparagine glycosylation. Intrachain disulfides connect Cys133/Cys176, Cys167/Cys209, and Cys267/Cys320. Cys136 is an active-site residue. Catalysis depends on residues His274 and Asn298.

Belongs to the peptidase C1 family.

It is found in the endosome. The protein resides in the lysosome. The protein localises to the cytoplasm. It localises to the perinuclear region. Its subcellular location is the golgi apparatus. It is found in the nucleus. The protein resides in the secreted. The protein localises to the extracellular space. Involved in trophoblast cell proliferation and differentiation probably by affecting mitotic cell cycle progression. Proteolytic activity and nuclear localization are essential for its role in cell cycle progression. The sequence is that of Cathepsin 7 (Cts7) from Rattus norvegicus (Rat).